Here is a 436-residue protein sequence, read N- to C-terminus: Xylose isomerase (436 aa).

Residues histidine 100 and aspartate 103 contribute to the active site. Mg(2+) is bound by residues glutamate 231, glutamate 267, histidine 270, aspartate 295, aspartate 306, aspartate 308, and aspartate 338.

It belongs to the xylose isomerase family. Homotetramer. Requires Mg(2+) as cofactor.

The protein resides in the cytoplasm. The enzyme catalyses alpha-D-xylose = alpha-D-xylulofuranose. This is Xylose isomerase from Rhizobium etli (strain CIAT 652).